Reading from the N-terminus, the 209-residue chain is Ribosomal RNA large subunit methyltransferase E (209 aa).

S-adenosyl-L-methionine is bound by residues glycine 63, tryptophan 65, aspartate 83, aspartate 99, and aspartate 124. Lysine 164 functions as the Proton acceptor in the catalytic mechanism.

It belongs to the class I-like SAM-binding methyltransferase superfamily. RNA methyltransferase RlmE family.

The protein resides in the cytoplasm. The catalysed reaction is uridine(2552) in 23S rRNA + S-adenosyl-L-methionine = 2'-O-methyluridine(2552) in 23S rRNA + S-adenosyl-L-homocysteine + H(+). Its function is as follows. Specifically methylates the uridine in position 2552 of 23S rRNA at the 2'-O position of the ribose in the fully assembled 50S ribosomal subunit. This Photorhabdus laumondii subsp. laumondii (strain DSM 15139 / CIP 105565 / TT01) (Photorhabdus luminescens subsp. laumondii) protein is Ribosomal RNA large subunit methyltransferase E.